We begin with the raw amino-acid sequence, 284 residues long: MTNKVVKIGDIPVANDLPFVLFGGMNVLESRDLAMRICEHYVTVTQKLGIPYVFKASFDKANRSSIHSYRGPGLEEGMKIFQELKQTFGVKIITDVHDSHQAQPVADVVDVIQLPAFLARQTDLVEAMAKTGAVINVKKPQFVSPGQMGNIVDKFIEGGNDQIILCDRGSNFGYDNLVVDMLGFNVMKHASNGSPVIFDVTHALQCRDPFGAASGGRRGQVTELARAGMAVGLAGLFIEAHPDPANAKCDGPSALPLDKLEPFLQQIKAIDDLVKSFPELDTSN.

This sequence belongs to the KdsA family.

The protein localises to the cytoplasm. It carries out the reaction D-arabinose 5-phosphate + phosphoenolpyruvate + H2O = 3-deoxy-alpha-D-manno-2-octulosonate-8-phosphate + phosphate. The protein operates within carbohydrate biosynthesis; 3-deoxy-D-manno-octulosonate biosynthesis; 3-deoxy-D-manno-octulosonate from D-ribulose 5-phosphate: step 2/3. It participates in bacterial outer membrane biogenesis; lipopolysaccharide biosynthesis. In Pectobacterium atrosepticum (strain SCRI 1043 / ATCC BAA-672) (Erwinia carotovora subsp. atroseptica), this protein is 2-dehydro-3-deoxyphosphooctonate aldolase.